Consider the following 261-residue polypeptide: Small ribosomal subunit protein uS2 (261 aa).

Belongs to the universal ribosomal protein uS2 family.

This chain is Small ribosomal subunit protein uS2, found in Streptococcus mutans serotype c (strain ATCC 700610 / UA159).